A 98-amino-acid chain; its full sequence is Ferredoxin-like protein (98 aa).

Residues 57-87 (GQVEVTVDGCIECGTCRVIAEPTGDIEWSHP) enclose the 4Fe-4S ferredoxin-type domain.

To ferredoxins from P.putida and C.tartarivorum, ferredoxin I from A.vinelandii, ferredoxin II from D.desulfuricans.

Its function is as follows. Could be a 3Fe-4S cluster-containing protein. This chain is Ferredoxin-like protein (fixX), found in Bradyrhizobium diazoefficiens (strain JCM 10833 / BCRC 13528 / IAM 13628 / NBRC 14792 / USDA 110).